The following is a 104-amino-acid chain: Urease subunit beta (104 aa).

It belongs to the urease beta subunit family. Heterotrimer of UreA (gamma), UreB (beta) and UreC (alpha) subunits. Three heterotrimers associate to form the active enzyme.

The protein localises to the cytoplasm. It carries out the reaction urea + 2 H2O + H(+) = hydrogencarbonate + 2 NH4(+). The protein operates within nitrogen metabolism; urea degradation; CO(2) and NH(3) from urea (urease route): step 1/1. This is Urease subunit beta from Synechococcus sp. (strain RCC307).